We begin with the raw amino-acid sequence, 261 residues long: uncharacterized protein (261 aa).

A divalent metal cation-binding residues include H7, H9, E96, H132, H156, and D211.

It belongs to the metallo-dependent hydrolases superfamily. TatD-type hydrolase family. A divalent metal cation serves as cofactor.

This is an uncharacterized protein from Mycoplasma pneumoniae (strain ATCC 29342 / M129 / Subtype 1) (Mycoplasmoides pneumoniae).